The following is a 186-amino-acid chain: Protein GrpE (186 aa).

Positions 1 to 15 (MADEQQTLDQQTPEQ) are enriched in polar residues. The tract at residues 1 to 20 (MADEQQTLDQQTPEQPTGAA) is disordered.

Belongs to the GrpE family. Homodimer.

It is found in the cytoplasm. Its function is as follows. Participates actively in the response to hyperosmotic and heat shock by preventing the aggregation of stress-denatured proteins, in association with DnaK and GrpE. It is the nucleotide exchange factor for DnaK and may function as a thermosensor. Unfolded proteins bind initially to DnaJ; upon interaction with the DnaJ-bound protein, DnaK hydrolyzes its bound ATP, resulting in the formation of a stable complex. GrpE releases ADP from DnaK; ATP binding to DnaK triggers the release of the substrate protein, thus completing the reaction cycle. Several rounds of ATP-dependent interactions between DnaJ, DnaK and GrpE are required for fully efficient folding. The chain is Protein GrpE from Pseudomonas aeruginosa (strain UCBPP-PA14).